The chain runs to 126 residues: Copper resistance protein C (126 aa).

The signal sequence occupies residues Met-1–Ala-23. His-24 contributes to the Cu(2+) binding site. Residues Met-63, Met-66, Met-69, His-72, and Met-75 each contribute to the Cu(+) site. Residue His-115 participates in Cu(2+) binding.

It belongs to the CopC family. Monomer-dimer equilibrium in solution for the apo protein. Dimerization is significantly enhanced upon binding of copper(I).

Its subcellular location is the periplasm. Its function is as follows. Copper-binding protein involved in copper resistance. In Escherichia coli, this protein is Copper resistance protein C.